Consider the following 211-residue polypeptide: Large ribosomal subunit protein uL4 (211 aa).

The segment at glutamine 41–glycine 87 is disordered. Residues glycine 60–glycine 71 show a composition bias toward basic residues.

It belongs to the universal ribosomal protein uL4 family. Part of the 50S ribosomal subunit.

One of the primary rRNA binding proteins, this protein initially binds near the 5'-end of the 23S rRNA. It is important during the early stages of 50S assembly. It makes multiple contacts with different domains of the 23S rRNA in the assembled 50S subunit and ribosome. Its function is as follows. Forms part of the polypeptide exit tunnel. The chain is Large ribosomal subunit protein uL4 from Parasynechococcus marenigrum (strain WH8102).